The sequence spans 340 residues: Phosphoribosylformylglycinamidine cyclo-ligase (340 aa).

This sequence belongs to the AIR synthase family.

The protein localises to the cytoplasm. It carries out the reaction 2-formamido-N(1)-(5-O-phospho-beta-D-ribosyl)acetamidine + ATP = 5-amino-1-(5-phospho-beta-D-ribosyl)imidazole + ADP + phosphate + H(+). It functions in the pathway purine metabolism; IMP biosynthesis via de novo pathway; 5-amino-1-(5-phospho-D-ribosyl)imidazole from N(2)-formyl-N(1)-(5-phospho-D-ribosyl)glycinamide: step 2/2. The polypeptide is Phosphoribosylformylglycinamidine cyclo-ligase (Streptococcus pneumoniae (strain 70585)).